The following is a 127-amino-acid chain: Small ribosomal subunit protein uS8m (127 aa).

The protein belongs to the universal ribosomal protein uS8 family.

The protein localises to the mitochondrion. The chain is Small ribosomal subunit protein uS8m (RPS8) from Acanthamoeba castellanii (Amoeba).